We begin with the raw amino-acid sequence, 152 residues long: Large ribosomal subunit protein bL21 (152 aa).

Residues 115-152 (VTSISNGEKPKKATTSAKPNTKKPSTAVKSSKVEKTPE) are disordered. The span at 127–143 (ATTSAKPNTKKPSTAVK) shows a compositional bias: polar residues.

This sequence belongs to the bacterial ribosomal protein bL21 family. In terms of assembly, part of the 50S ribosomal subunit. Contacts protein L20.

Functionally, this protein binds to 23S rRNA in the presence of protein L20. This Prochlorococcus marinus (strain SARG / CCMP1375 / SS120) protein is Large ribosomal subunit protein bL21.